A 525-amino-acid polypeptide reads, in one-letter code: Apolipoprotein N-acyltransferase 2 (525 aa).

The next 6 helical transmembrane spans lie at 25-45 (ILNF…YYAL), 56-76 (FLYG…LAFF), 81-101 (IFTL…FGFL), 115-135 (FFFA…FLAY), 153-173 (FVDI…AACL), and 200-220 (LIFT…ILSI). Residues 228-486 (LNTVIVQQNT…AESVYTEVPV (259 aa)) enclose the CN hydrolase domain. The active-site Proton acceptor is Glu-274. Lys-339 is a catalytic residue. Cys-397 acts as the Nucleophile in catalysis. A helical transmembrane segment spans residues 495–515 (ASYKDWLPIMMFLILIFNIFL).

It belongs to the CN hydrolase family. Apolipoprotein N-acyltransferase subfamily.

It is found in the cell inner membrane. The catalysed reaction is N-terminal S-1,2-diacyl-sn-glyceryl-L-cysteinyl-[lipoprotein] + a glycerophospholipid = N-acyl-S-1,2-diacyl-sn-glyceryl-L-cysteinyl-[lipoprotein] + a 2-acyl-sn-glycero-3-phospholipid + H(+). It participates in protein modification; lipoprotein biosynthesis (N-acyl transfer). In terms of biological role, catalyzes the phospholipid dependent N-acylation of the N-terminal cysteine of apolipoprotein, the last step in lipoprotein maturation. This is Apolipoprotein N-acyltransferase 2 from Treponema denticola (strain ATCC 35405 / DSM 14222 / CIP 103919 / JCM 8153 / KCTC 15104).